Consider the following 182-residue polypeptide: Large ribosomal subunit protein uL16 (182 aa).

The protein belongs to the universal ribosomal protein uL16 family.

This Pyrobaculum arsenaticum (strain DSM 13514 / JCM 11321 / PZ6) protein is Large ribosomal subunit protein uL16.